The following is a 244-amino-acid chain: 6-carboxyhexanoate--CoA ligase (244 aa).

The protein belongs to the BioW family. As to quaternary structure, homodimer. Requires Mg(2+) as cofactor.

It catalyses the reaction heptanedioate + ATP + CoA = 6-carboxyhexanoyl-CoA + AMP + diphosphate. Its pathway is metabolic intermediate metabolism; pimeloyl-CoA biosynthesis; pimeloyl-CoA from pimelate: step 1/1. Functionally, catalyzes the transformation of pimelate into pimeloyl-CoA with concomitant hydrolysis of ATP to AMP. In Methanococcus maripaludis (strain DSM 14266 / JCM 13030 / NBRC 101832 / S2 / LL), this protein is 6-carboxyhexanoate--CoA ligase.